A 325-amino-acid polypeptide reads, in one-letter code: Glutarate 2-hydroxylase (325 aa).

Fe cation contacts are provided by His160, Asp162, and His292.

The protein belongs to the glutarate hydroxylase family. In terms of assembly, homotetramer. The cofactor is Fe(2+).

The catalysed reaction is glutarate + 2-oxoglutarate + O2 = (S)-2-hydroxyglutarate + succinate + CO2. The protein operates within amino-acid degradation. Functionally, acts as an alpha-ketoglutarate-dependent dioxygenase catalyzing hydroxylation of glutarate (GA) to L-2-hydroxyglutarate (L2HG). Functions in a L-lysine degradation pathway that proceeds via cadaverine, glutarate and L-2-hydroxyglutarate. The protein is Glutarate 2-hydroxylase of Salmonella typhimurium (strain SL1344).